The sequence spans 159 residues: 2-C-methyl-D-erythritol 2,4-cyclodiphosphate synthase (159 aa).

Residues aspartate 10 and histidine 12 each coordinate a divalent metal cation. Residues 10-12 (DVH) and 36-37 (HS) contribute to the 4-CDP-2-C-methyl-D-erythritol 2-phosphate site. Histidine 44 contacts a divalent metal cation. 4-CDP-2-C-methyl-D-erythritol 2-phosphate contacts are provided by residues 58–60 (DIG), 63–67 (FANTD), 134–137 (TTNE), and arginine 144.

It belongs to the IspF family. Homotrimer. It depends on a divalent metal cation as a cofactor.

It catalyses the reaction 4-CDP-2-C-methyl-D-erythritol 2-phosphate = 2-C-methyl-D-erythritol 2,4-cyclic diphosphate + CMP. It functions in the pathway isoprenoid biosynthesis; isopentenyl diphosphate biosynthesis via DXP pathway; isopentenyl diphosphate from 1-deoxy-D-xylulose 5-phosphate: step 4/6. Involved in the biosynthesis of isopentenyl diphosphate (IPP) and dimethylallyl diphosphate (DMAPP), two major building blocks of isoprenoid compounds. Catalyzes the conversion of 4-diphosphocytidyl-2-C-methyl-D-erythritol 2-phosphate (CDP-ME2P) to 2-C-methyl-D-erythritol 2,4-cyclodiphosphate (ME-CPP) with a corresponding release of cytidine 5-monophosphate (CMP). This chain is 2-C-methyl-D-erythritol 2,4-cyclodiphosphate synthase, found in Cytophaga hutchinsonii (strain ATCC 33406 / DSM 1761 / CIP 103989 / NBRC 15051 / NCIMB 9469 / D465).